Here is a 143-residue protein sequence, read N- to C-terminus: Transcriptional regulator SlyA (143 aa).

Positions 2–135 (ESTLGSDLAR…LSTLVQKLEQ (134 aa)) constitute an HTH marR-type domain. The H-T-H motif DNA-binding region spans 49 to 72 (QIQLAKAIGIEQPSLVRTLDQLEE).

Belongs to the SlyA family. As to quaternary structure, homodimer.

Functionally, transcription regulator that can specifically activate or repress expression of target genes. Regulates the cpm operon, which contains cpmA, cpmB, cpmC, cpmD, cpmE, cpmF, cpmG and cpmH, involved in carbapenem-like antibiotic production. The chain is Transcriptional regulator SlyA from Photorhabdus laumondii subsp. laumondii (strain DSM 15139 / CIP 105565 / TT01) (Photorhabdus luminescens subsp. laumondii).